The chain runs to 345 residues: Anthranilate phosphoribosyltransferase (345 aa).

5-phospho-alpha-D-ribose 1-diphosphate-binding positions include Gly-80, 83-84 (GD), Thr-88, 90-93 (NIST), 108-116 (KHGNRSVTS), and Ser-120. Gly-80 lines the anthranilate pocket. Mg(2+) is bound at residue Ser-92. Anthranilate is bound at residue Asn-111. Arg-166 is an anthranilate binding site. Positions 229 and 230 each coordinate Mg(2+).

The protein belongs to the anthranilate phosphoribosyltransferase family. Homodimer. Mg(2+) is required as a cofactor.

It catalyses the reaction N-(5-phospho-beta-D-ribosyl)anthranilate + diphosphate = 5-phospho-alpha-D-ribose 1-diphosphate + anthranilate. It participates in amino-acid biosynthesis; L-tryptophan biosynthesis; L-tryptophan from chorismate: step 2/5. Functionally, catalyzes the transfer of the phosphoribosyl group of 5-phosphorylribose-1-pyrophosphate (PRPP) to anthranilate to yield N-(5'-phosphoribosyl)-anthranilate (PRA). The polypeptide is Anthranilate phosphoribosyltransferase (Chlorobium phaeobacteroides (strain BS1)).